The chain runs to 597 residues: Elongation factor 4 (597 aa).

Residues Ser-4–Lys-181 enclose the tr-type G domain. Residues Asp-16–Thr-21 and Asn-128–Asp-131 contribute to the GTP site.

It belongs to the TRAFAC class translation factor GTPase superfamily. Classic translation factor GTPase family. LepA subfamily.

The protein localises to the cell membrane. It carries out the reaction GTP + H2O = GDP + phosphate + H(+). Required for accurate and efficient protein synthesis under certain stress conditions. May act as a fidelity factor of the translation reaction, by catalyzing a one-codon backward translocation of tRNAs on improperly translocated ribosomes. Back-translocation proceeds from a post-translocation (POST) complex to a pre-translocation (PRE) complex, thus giving elongation factor G a second chance to translocate the tRNAs correctly. Binds to ribosomes in a GTP-dependent manner. This is Elongation factor 4 from Mycoplasmopsis agalactiae (strain NCTC 10123 / CIP 59.7 / PG2) (Mycoplasma agalactiae).